Here is a 72-residue protein sequence, read N- to C-terminus: Translation initiation factor IF-1 (72 aa).

In terms of domain architecture, S1-like spans M1–K72.

This sequence belongs to the IF-1 family. In terms of assembly, component of the 30S ribosomal translation pre-initiation complex which assembles on the 30S ribosome in the order IF-2 and IF-3, IF-1 and N-formylmethionyl-tRNA(fMet); mRNA recruitment can occur at any time during PIC assembly.

The protein resides in the cytoplasm. Functionally, one of the essential components for the initiation of protein synthesis. Stabilizes the binding of IF-2 and IF-3 on the 30S subunit to which N-formylmethionyl-tRNA(fMet) subsequently binds. Helps modulate mRNA selection, yielding the 30S pre-initiation complex (PIC). Upon addition of the 50S ribosomal subunit IF-1, IF-2 and IF-3 are released leaving the mature 70S translation initiation complex. This Chlorobium chlorochromatii (strain CaD3) protein is Translation initiation factor IF-1.